Here is a 226-residue protein sequence, read N- to C-terminus: UPF0173 metal-dependent hydrolase Fnod_0635 (226 aa).

This sequence belongs to the UPF0173 family.

The sequence is that of UPF0173 metal-dependent hydrolase Fnod_0635 from Fervidobacterium nodosum (strain ATCC 35602 / DSM 5306 / Rt17-B1).